The following is a 173-amino-acid chain: bZIP transcription factor 44 (173 aa).

The segment at 1–65 (MNNKTEMGSS…SRMRKQKHLD (65 aa)) is disordered. Over residues 8 to 22 (GSSTSGNCSSVSTTG) the composition is skewed to low complexity. The segment covering 30 to 41 (SDLRQRDLIDER) has biased composition (basic and acidic residues). In terms of domain architecture, bZIP spans 39 to 102 (DERKRKRKQS…VTIEAENDIL (64 aa)). Residues 41–62 (RKRKRKQSNRESARRSRMRKQK) form a basic motif region. Residues 67 to 81 (LTAQVTHLRKENAQI) form a leucine-zipper region.

As to quaternary structure, forms heterodimers with BZIP1, BZIP9, BZIP10, BZIP25 and BZIP63. In terms of tissue distribution, expressed in the micropylar endosperm and radicle tip in early germinating seeds.

The protein resides in the nucleus. In terms of biological role, transcription factor that binds to the DNA G-box motif 5'-CACGTG-3' of MAN7 promoter. Involved in the positive regulation of seed germination through MAN7 gene activation. MAN7 is required for both, loosening of the micropylar endosperm, and rupture of the seed coat in germinating seeds. This is bZIP transcription factor 44 from Arabidopsis thaliana (Mouse-ear cress).